The primary structure comprises 456 residues: CBL-interacting protein kinase 16 (456 aa).

The Protein kinase domain occupies 22–277; it reads YELGRLLGQG…IPEIMRTPWF (256 aa). ATP-binding positions include 28 to 36 and lysine 51; that span reads LGQGTFAKV. Aspartate 145 serves as the catalytic Proton acceptor. Residues 163 to 192 form an activation loop region; sequence DFGLAALPEQLRQDGLLHTQCGTPAYVAPE. An NAF domain is found at 309–335; that stretch reads AMSPRTCNAFQLISSMSSGFDLSGMFE. The PPI stretch occupies residues 339 to 368; that stretch reads KAATVFTSRAPAATVIQKLEAVGRSLGYSA.

This sequence belongs to the protein kinase superfamily. CAMK Ser/Thr protein kinase family. SNF1 subfamily. The cofactor is Mn(2+).

It catalyses the reaction L-seryl-[protein] + ATP = O-phospho-L-seryl-[protein] + ADP + H(+). It carries out the reaction L-threonyl-[protein] + ATP = O-phospho-L-threonyl-[protein] + ADP + H(+). CIPK serine-threonine protein kinases interact with CBL proteins. Binding of a CBL protein to the regulatory NAF domain of CIPK protein lead to the activation of the kinase in a calcium-dependent manner. This is CBL-interacting protein kinase 16 (CIPK16) from Oryza sativa subsp. japonica (Rice).